A 1076-amino-acid chain; its full sequence is Bifunctional glutamine synthetase adenylyltransferase/adenylyl-removing enzyme (1076 aa).

The tract at residues 1 to 521 (MESSIFKPSS…LHLDIYYRPM (521 aa)) is adenylyl removase. Positions 524 to 1076 (VNAQMENDQI…LERNRRRAQR (553 aa)) are adenylyl transferase. Residues 1042-1056 (TATASAATQQPQTAP) are compositionally biased toward low complexity. The disordered stretch occupies residues 1042-1076 (TATASAATQQPQTAPRPRMHVIAPRLERNRRRAQR).

It belongs to the GlnE family. It depends on Mg(2+) as a cofactor.

It catalyses the reaction [glutamine synthetase]-O(4)-(5'-adenylyl)-L-tyrosine + phosphate = [glutamine synthetase]-L-tyrosine + ADP. It carries out the reaction [glutamine synthetase]-L-tyrosine + ATP = [glutamine synthetase]-O(4)-(5'-adenylyl)-L-tyrosine + diphosphate. Involved in the regulation of glutamine synthetase GlnA, a key enzyme in the process to assimilate ammonia. When cellular nitrogen levels are high, the C-terminal adenylyl transferase (AT) inactivates GlnA by covalent transfer of an adenylyl group from ATP to specific tyrosine residue of GlnA, thus reducing its activity. Conversely, when nitrogen levels are low, the N-terminal adenylyl removase (AR) activates GlnA by removing the adenylyl group by phosphorolysis, increasing its activity. The regulatory region of GlnE binds the signal transduction protein PII (GlnB) which indicates the nitrogen status of the cell. This is Bifunctional glutamine synthetase adenylyltransferase/adenylyl-removing enzyme from Bifidobacterium longum (strain DJO10A).